A 241-amino-acid chain; its full sequence is DnaA regulatory inactivator Hda (241 aa).

The protein belongs to the DnaA family. HdA subfamily. As to quaternary structure, the active form seems to be an ADP-bound monomer. Forms the RIDA complex (regulatory inactivation of DnaA) of ATP-DnaA, ADP-Hda and the DNA-loaded beta sliding clamp (dnaN).

Mediates the interaction of DNA replication initiator protein DnaA with DNA polymerase subunit beta sliding clamp (dnaN). Stimulates hydrolysis of ATP-DnaA to ADP-DnaA, rendering DnaA inactive for reinitiation, a process called regulatory inhibition of DnaA or RIDA. This Salmonella paratyphi A (strain ATCC 9150 / SARB42) protein is DnaA regulatory inactivator Hda.